The sequence spans 224 residues: MLTSEISESEKPREKLQNYGIEALSSSELVALIIETGTKNESVLTIANRIIMKFKHVAEMQYASIEEFQLVNGIGVAKASKIMAAIELGRRISIVTNQEEIVIRCPDDAVKLVMPELAFLFQEHFHCIFLNTKNQVIYRQTIFVGGLNASIVHPREVFRLALRKSSAAIMCFHNHPSGDPTPSSEDLLVTKRLVEAGNIIGITLLDHIIIGKNKYISLKEKGYF.

In terms of domain architecture, MPN spans 102–224 (VIRCPDDAVK…YISLKEKGYF (123 aa)). Zn(2+) is bound by residues H173, H175, and D186. The JAMM motif motif lies at 173–186 (HNHPSGDPTPSSED).

The protein belongs to the UPF0758 family.

The sequence is that of UPF0758 protein lwe1562 from Listeria welshimeri serovar 6b (strain ATCC 35897 / DSM 20650 / CCUG 15529 / CIP 8149 / NCTC 11857 / SLCC 5334 / V8).